Reading from the N-terminus, the 481-residue chain is Glucan endo-1,3-beta-glucosidase 8 (481 aa).

The signal sequence occupies residues 1–33 (MSNLLALVVGFVIVIGHLGILVNGLGVNWGTMA). N-linked (GlcNAc...) asparagine glycans are attached at residues Asn-99 and Asn-110. The active-site Proton donor is the Glu-119. N-linked (GlcNAc...) asparagine glycans are attached at residues Asn-126 and Asn-131. Glu-265 serves as the catalytic Nucleophile. Cys-367 and Cys-428 are disulfide-bonded. Asn-409 and Asn-440 each carry an N-linked (GlcNAc...) asparagine glycan. The GPI-anchor amidated serine moiety is linked to residue Ser-455. Residues 456-481 (SASSFSCSSYSLVVLIVWFLLSGMMF) constitute a propeptide, removed in mature form.

This sequence belongs to the glycosyl hydrolase 17 family. Post-translationally, contains two additional disulfide bonds.

It localises to the secreted. Its subcellular location is the cell wall. The protein resides in the cell membrane. It carries out the reaction Hydrolysis of (1-&gt;3)-beta-D-glucosidic linkages in (1-&gt;3)-beta-D-glucans.. This is Glucan endo-1,3-beta-glucosidase 8 from Arabidopsis thaliana (Mouse-ear cress).